Here is a 455-residue protein sequence, read N- to C-terminus: Ribulose bisphosphate carboxylase large chain (455 aa).

N6,N6,N6-trimethyllysine is present on Lys5. Substrate is bound by residues Asn114 and Thr164. Lys166 (proton acceptor) is an active-site residue. Position 168 (Lys168) interacts with substrate. Mg(2+) is bound by residues Lys192, Asp194, and Glu195. An N6-carboxylysine modification is found at Lys192. Catalysis depends on His285, which acts as the Proton acceptor. Positions 286, 318, and 370 each coordinate substrate.

This sequence belongs to the RuBisCO large chain family. Type I subfamily. In terms of assembly, heterohexadecamer of 8 large chains and 8 small chains; disulfide-linked. The disulfide link is formed within the large subunit homodimers. The cofactor is Mg(2+). The disulfide bond which can form in the large chain dimeric partners within the hexadecamer appears to be associated with oxidative stress and protein turnover.

The protein resides in the plastid. It is found in the chloroplast. It catalyses the reaction 2 (2R)-3-phosphoglycerate + 2 H(+) = D-ribulose 1,5-bisphosphate + CO2 + H2O. The catalysed reaction is D-ribulose 1,5-bisphosphate + O2 = 2-phosphoglycolate + (2R)-3-phosphoglycerate + 2 H(+). Its function is as follows. RuBisCO catalyzes two reactions: the carboxylation of D-ribulose 1,5-bisphosphate, the primary event in carbon dioxide fixation, as well as the oxidative fragmentation of the pentose substrate in the photorespiration process. Both reactions occur simultaneously and in competition at the same active site. The polypeptide is Ribulose bisphosphate carboxylase large chain (Lupinus arcticus (Arctic lupine)).